The chain runs to 190 residues: Probable E3 ubiquitin-protein ligase RHB1A (190 aa).

The RING-type; atypical zinc-finger motif lies at 139–180; it reads CPICFEDYDVENPRLTTKCEHEFHLSCLLEWIERSDRCPICD.

The catalysed reaction is S-ubiquitinyl-[E2 ubiquitin-conjugating enzyme]-L-cysteine + [acceptor protein]-L-lysine = [E2 ubiquitin-conjugating enzyme]-L-cysteine + N(6)-ubiquitinyl-[acceptor protein]-L-lysine.. It functions in the pathway protein modification; protein ubiquitination. In terms of biological role, probable E3 ubiquitin-protein ligase that may possess E3 ubiquitin ligase activity in vitro. In Arabidopsis thaliana (Mouse-ear cress), this protein is Probable E3 ubiquitin-protein ligase RHB1A.